The chain runs to 446 residues: Signal recognition particle protein (446 aa).

Residues 108 to 115, 191 to 195, and 249 to 252 contribute to the GTP site; these read GLQGAGKT, DTAGR, and TKLD.

It belongs to the GTP-binding SRP family. SRP54 subfamily. Part of the signal recognition particle protein translocation system, which is composed of SRP and FtsY. Interacts with a small cytoplasmic RNA (sc-RNA).

The protein localises to the cytoplasm. The catalysed reaction is GTP + H2O = GDP + phosphate + H(+). Functionally, involved in targeting and insertion of nascent membrane proteins into the cytoplasmic membrane. Binds to the hydrophobic signal sequence of the ribosome-nascent chain (RNC) as it emerges from the ribosomes. The SRP-RNC complex is then targeted to the cytoplasmic membrane where it interacts with the SRP receptor FtsY. Interaction with FtsY leads to the transfer of the RNC complex to the Sec translocase for insertion into the membrane, the hydrolysis of GTP by both Ffh and FtsY, and the dissociation of the SRP-FtsY complex into the individual components. This is Signal recognition particle protein from Bacillus subtilis (strain 168).